Consider the following 410-residue polypeptide: Cathepsin D (410 aa).

Positions 1-18 are cleaved as a signal peptide; sequence MQPPSLLLLVLGLLAAPA. The propeptide at 19 to 64 is activation peptide; it reads AALVRIPLHKFTSVRRTMTELGGPVEDLIAKGPISKYAQGAPAVTG. A Peptidase A1 domain is found at 79–405; sequence YYGEIGIGTP…DRDQNRVGLA (327 aa). 2 disulfide bridges follow: cysteine 91-cysteine 160 and cysteine 110-cysteine 117. Aspartate 97 is a catalytic residue. N-linked (GlcNAc...) asparagine glycosylation is found at asparagine 134 and asparagine 261. Cysteine 284 and cysteine 288 form a disulfide bridge. Residue aspartate 293 is part of the active site. Cysteines 327 and 364 form a disulfide.

The protein belongs to the peptidase A1 family. In terms of assembly, consists of a light chain and a heavy chain. Interacts with ADAM30; this leads to activation of CTSD. Interacts with GRN; stabilizes CTSD; increases its proteolytic activity. N- and O-glycosylated. Post-translationally, undergoes proteolytic cleavage and activation by ADAM30.

It localises to the lysosome. The protein localises to the melanosome. The protein resides in the secreted. Its subcellular location is the extracellular space. The enzyme catalyses Specificity similar to, but narrower than, that of pepsin A. Does not cleave the 4-Gln-|-His-5 bond in B chain of insulin.. Acid protease active in intracellular protein breakdown. Plays a role in APP processing following cleavage and activation by ADAM30 which leads to APP degradation. The chain is Cathepsin D (CTSD) from Canis lupus familiaris (Dog).